Reading from the N-terminus, the 249-residue chain is 3-deoxy-D-manno-octulosonic acid kinase (249 aa).

Residue Asp-175 is part of the active site.

The protein belongs to the protein kinase superfamily. KdkA/RfaP family.

The protein localises to the cell inner membrane. The enzyme catalyses an alpha-Kdo-(2-&gt;6)-lipid IVA + ATP = a 4-O-phospho-alpha-Kdo-(2-&gt;6)-lipid IVA + ADP + H(+). Its pathway is bacterial outer membrane biogenesis; LPS core biosynthesis. Its function is as follows. Catalyzes the ATP-dependent phosphorylation of the 3-deoxy-D-manno-octulosonic acid (Kdo) residue in Kdo-lipid IV(A) at the 4-OH position. This Xanthomonas oryzae pv. oryzae (strain PXO99A) protein is 3-deoxy-D-manno-octulosonic acid kinase.